We begin with the raw amino-acid sequence, 376 residues long: Lipid-A-disaccharide synthase (376 aa).

It belongs to the LpxB family.

It catalyses the reaction a lipid X + a UDP-2-N,3-O-bis[(3R)-3-hydroxyacyl]-alpha-D-glucosamine = a lipid A disaccharide + UDP + H(+). The protein operates within bacterial outer membrane biogenesis; LPS lipid A biosynthesis. In terms of biological role, condensation of UDP-2,3-diacylglucosamine and 2,3-diacylglucosamine-1-phosphate to form lipid A disaccharide, a precursor of lipid A, a phosphorylated glycolipid that anchors the lipopolysaccharide to the outer membrane of the cell. This Coxiella burnetii (strain Dugway 5J108-111) protein is Lipid-A-disaccharide synthase.